The sequence spans 345 residues: Phenylalanine--tRNA ligase alpha subunit (345 aa).

Position 259 (Glu-259) interacts with Mg(2+).

This sequence belongs to the class-II aminoacyl-tRNA synthetase family. Phe-tRNA synthetase alpha subunit type 1 subfamily. In terms of assembly, tetramer of two alpha and two beta subunits. It depends on Mg(2+) as a cofactor.

It localises to the cytoplasm. The enzyme catalyses tRNA(Phe) + L-phenylalanine + ATP = L-phenylalanyl-tRNA(Phe) + AMP + diphosphate + H(+). The protein is Phenylalanine--tRNA ligase alpha subunit of Lactococcus lactis subsp. cremoris (strain SK11).